A 492-amino-acid polypeptide reads, in one-letter code: Bifunctional purine biosynthesis protein PurH (492 aa).

Positions 1 to 144 (MKKAILSVSN…KNYKHVTTIV (144 aa)) constitute an MGS-like domain.

The protein belongs to the PurH family.

It catalyses the reaction (6R)-10-formyltetrahydrofolate + 5-amino-1-(5-phospho-beta-D-ribosyl)imidazole-4-carboxamide = 5-formamido-1-(5-phospho-D-ribosyl)imidazole-4-carboxamide + (6S)-5,6,7,8-tetrahydrofolate. The enzyme catalyses IMP + H2O = 5-formamido-1-(5-phospho-D-ribosyl)imidazole-4-carboxamide. It functions in the pathway purine metabolism; IMP biosynthesis via de novo pathway; 5-formamido-1-(5-phospho-D-ribosyl)imidazole-4-carboxamide from 5-amino-1-(5-phospho-D-ribosyl)imidazole-4-carboxamide (10-formyl THF route): step 1/1. Its pathway is purine metabolism; IMP biosynthesis via de novo pathway; IMP from 5-formamido-1-(5-phospho-D-ribosyl)imidazole-4-carboxamide: step 1/1. The polypeptide is Bifunctional purine biosynthesis protein PurH (Staphylococcus aureus (strain JH1)).